The primary structure comprises 427 residues: MEAKVEKIETNVVKLEIKVEAEKFDAALTKAYNKNKGKYNVPGFRKGKVPMAILKKMYGIEIFYDDAVNIAIDESYNEALKAEDIRPVDYPKVDIVEIGEGKELVYTATVTTYPEVEIGEYKGLDIKKPSYEVSEEEVEKQVKEMQSKNARIETKEEGTIADGNIAIIDFKGFVDGEAFEGGEGTDYPLEIGSGTFIDNFEEQLIGLAIGDKKEVNVTFPENYGKEELNAKPAMFEVTVKGIKAKELPELDDEFAKEVSEFDTLAELKENIKKRLEESNDERAEREFEEAVITSIIETSKIDLPEVMLTKEIDSMMKDLESRLQYQGLSLDQYMEFTGNTMEKMREFMKENAERKVKADIILESVAKAEDVKATDEQLNERALELGRMYGPKDPKKMANILLKAQKGMIEKDIIIENTLKLIKESCK.

The region spanning 163–248 (GNIAIIDFKG…VKGIKAKELP (86 aa)) is the PPIase FKBP-type domain.

The protein belongs to the FKBP-type PPIase family. Tig subfamily.

The protein resides in the cytoplasm. The catalysed reaction is [protein]-peptidylproline (omega=180) = [protein]-peptidylproline (omega=0). In terms of biological role, involved in protein export. Acts as a chaperone by maintaining the newly synthesized protein in an open conformation. Functions as a peptidyl-prolyl cis-trans isomerase. The polypeptide is Trigger factor (Clostridium botulinum (strain Eklund 17B / Type B)).